The primary structure comprises 333 residues: GTP 3',8-cyclase (333 aa).

The 215-residue stretch at 7 to 221 (KFGRVHDYIR…FEACNEAGYE (215 aa)) folds into the Radical SAM core domain. Residue Arg16 participates in GTP binding. [4Fe-4S] cluster is bound by residues Cys23 and Cys27. Tyr29 contacts S-adenosyl-L-methionine. Cys30 contributes to the [4Fe-4S] cluster binding site. Arg66 lines the GTP pocket. Residue Gly70 coordinates S-adenosyl-L-methionine. Residue Thr97 coordinates GTP. Ser121 contributes to the S-adenosyl-L-methionine binding site. Lys158 is a binding site for GTP. Met192 contacts S-adenosyl-L-methionine. [4Fe-4S] cluster contacts are provided by Cys257 and Cys260. 262-264 (RLR) contacts GTP. Position 274 (Cys274) interacts with [4Fe-4S] cluster.

The protein belongs to the radical SAM superfamily. MoaA family. Monomer and homodimer. It depends on [4Fe-4S] cluster as a cofactor.

The enzyme catalyses GTP + AH2 + S-adenosyl-L-methionine = (8S)-3',8-cyclo-7,8-dihydroguanosine 5'-triphosphate + 5'-deoxyadenosine + L-methionine + A + H(+). It functions in the pathway cofactor biosynthesis; molybdopterin biosynthesis. Catalyzes the cyclization of GTP to (8S)-3',8-cyclo-7,8-dihydroguanosine 5'-triphosphate. This Listeria monocytogenes serovar 1/2a (strain ATCC BAA-679 / EGD-e) protein is GTP 3',8-cyclase.